The sequence spans 338 residues: Methionine import ATP-binding protein MetN 2 (338 aa).

The ABC transporter domain maps to 2-242; the sequence is IEIEKVCVDF…PQHAFTQQLV (241 aa). 39-46 contacts ATP; sequence GTSGAGKS.

The protein belongs to the ABC transporter superfamily. Methionine importer (TC 3.A.1.24) family. In terms of assembly, the complex is composed of two ATP-binding proteins (MetN), two transmembrane proteins (MetI) and a solute-binding protein (MetQ).

Its subcellular location is the cell inner membrane. The enzyme catalyses L-methionine(out) + ATP + H2O = L-methionine(in) + ADP + phosphate + H(+). The catalysed reaction is D-methionine(out) + ATP + H2O = D-methionine(in) + ADP + phosphate + H(+). Functionally, part of the ABC transporter complex MetNIQ involved in methionine import. Responsible for energy coupling to the transport system. The polypeptide is Methionine import ATP-binding protein MetN 2 (Salmonella paratyphi A (strain ATCC 9150 / SARB42)).